A 377-amino-acid polypeptide reads, in one-letter code: Alanine racemase (377 aa).

Lys-33 serves as the catalytic Proton acceptor; specific for D-alanine. Lys-33 carries the N6-(pyridoxal phosphate)lysine modification. Arg-134 contacts substrate. Residue Tyr-267 is the Proton acceptor; specific for L-alanine of the active site. Met-315 serves as a coordination point for substrate.

It belongs to the alanine racemase family. The cofactor is pyridoxal 5'-phosphate.

It catalyses the reaction L-alanine = D-alanine. It participates in amino-acid biosynthesis; D-alanine biosynthesis; D-alanine from L-alanine: step 1/1. Its function is as follows. Catalyzes the interconversion of L-alanine and D-alanine. May also act on other amino acids. In Treponema pallidum subsp. pallidum (strain SS14), this protein is Alanine racemase (alr).